Here is a 495-residue protein sequence, read N- to C-terminus: Cysteine--tRNA ligase (495 aa).

C29 is a Zn(2+) binding site. Residues 31-41 (PTVYDYGHIGN) carry the 'HIGH' region motif. Residues C211, H236, and E240 each contribute to the Zn(2+) site. The short motif at 268–272 (KMSKS) is the 'KMSKS' region element. K271 contacts ATP.

This sequence belongs to the class-I aminoacyl-tRNA synthetase family. In terms of assembly, monomer. The cofactor is Zn(2+).

Its subcellular location is the cytoplasm. The enzyme catalyses tRNA(Cys) + L-cysteine + ATP = L-cysteinyl-tRNA(Cys) + AMP + diphosphate. This Koribacter versatilis (strain Ellin345) protein is Cysteine--tRNA ligase.